The primary structure comprises 755 residues: Dolichyl-phosphate-mannose--protein mannosyltransferase 4 (755 aa).

The segment at 1 to 23 is disordered; that stretch reads MSQTLKKRGGNSSGRKSPTTSNI. Asn-11 carries an N-linked (GlcNAc...) asparagine glycan. Residues 13–23 are compositionally biased toward polar residues; that stretch reads SGRKSPTTSNI. 6 helical membrane-spanning segments follow: residues 92–112, 147–167, 185–205, 212–232, 237–257, and 278–298; these read FFDL…WLIG, IVPI…ACLF, ILLD…YSKF, SFSS…SCVI, VGVF…WILL, and ALII…FAIL. 3 consecutive MIR domains span residues 325 to 389, 396 to 454, and 466 to 523; these read SKPV…IVPT, GTKV…LRLH, and KKEI…FDLI. An N-linked (GlcNAc...) asparagine glycan is attached at Asn-445. A run of 3 helical transmembrane segments spans residues 595–615, 640–660, and 670–690; these read IFFI…SIYI, LYNT…PFFL, and YLPA…FICS. N-linked (GlcNAc...) asparagine glycosylation is present at Asn-691. The helical transmembrane segment at 706-726 threads the bilayer; it reads YKIIAVVAACSTAIIWFFFYF.

The protein belongs to the glycosyltransferase 39 family. Forms a functional homodimer.

Its subcellular location is the endoplasmic reticulum membrane. It carries out the reaction a di-trans,poly-cis-dolichyl beta-D-mannosyl phosphate + L-seryl-[protein] = 3-O-(alpha-D-mannosyl)-L-seryl-[protein] + a di-trans,poly-cis-dolichyl phosphate + H(+). The catalysed reaction is a di-trans,poly-cis-dolichyl beta-D-mannosyl phosphate + L-threonyl-[protein] = 3-O-(alpha-D-mannosyl)-L-threonyl-[protein] + a di-trans,poly-cis-dolichyl phosphate + H(+). Its pathway is protein modification; protein glycosylation. Protein mannosyltransferase (PMT) involved in hyphal growth and drug sensitivity. Transfers mannose from Dol-P-mannose to Ser or Thr residues on proteins. PMT1, PMT2 and PMT4 account for most of the protein-O-glycosylation activity, while PMT5 and PMT6 may specifically modulate a much narrower spectrum of target proteins. Accounts for the O-glycosylation of AXL2, responsible for bud site selection, as well as of the SEC20 t-SNARE component. O-glycosylation of SEC20 is essential for its stability. Required for biofilm formation. In Candida albicans (strain SC5314 / ATCC MYA-2876) (Yeast), this protein is Dolichyl-phosphate-mannose--protein mannosyltransferase 4.